Reading from the N-terminus, the 184-residue chain is GTPase RhebL1 (184 aa).

GTP contacts are provided by residues 16–21 (SVGKTS), 32–38 (LEGYDPT), glycine 63, 119–122 (NKAD), and 149–150 (SA). An Effector region motif is present at residues 35–43 (YDPTVENTY). Threonine 38 is a Mg(2+) binding site. Cysteine methyl ester is present on cysteine 181. Residue cysteine 181 is the site of S-farnesyl cysteine attachment. Positions 182–184 (YLM) are cleaved as a propeptide — removed in mature form.

This sequence belongs to the small GTPase superfamily. Rheb family. In terms of assembly, interacts with MTOR.

The protein localises to the endomembrane system. It localises to the cytoplasm. The enzyme catalyses GTP + H2O = GDP + phosphate + H(+). Functionally, binds GTP and exhibits intrinsic GTPase activity. May activate NF-kappa-B-mediated gene transcription. Promotes signal transduction through MTOR, activates RPS6KB1, and is a downstream target of the small GTPase-activating proteins TSC1 and TSC2. The protein is GTPase RhebL1 (Rhebl1) of Mus musculus (Mouse).